The chain runs to 236 residues: Segregation and condensation protein A (236 aa).

Belongs to the ScpA family. In terms of assembly, component of a cohesin-like complex composed of ScpA, ScpB and the Smc homodimer, in which ScpA and ScpB bind to the head domain of Smc. The presence of the three proteins is required for the association of the complex with DNA.

The protein resides in the cytoplasm. Participates in chromosomal partition during cell division. May act via the formation of a condensin-like complex containing Smc and ScpB that pull DNA away from mid-cell into both cell halves. This Streptococcus sanguinis (strain SK36) protein is Segregation and condensation protein A.